The primary structure comprises 425 residues: Serine--tRNA ligase (425 aa).

Residue threonine 233–glutamate 235 participates in L-serine binding. An ATP-binding site is contributed by arginine 264–glutamate 266. Residue glutamate 287 participates in L-serine binding. Glutamate 351–serine 354 contacts ATP. Serine 385 contacts L-serine.

The protein belongs to the class-II aminoacyl-tRNA synthetase family. Type-1 seryl-tRNA synthetase subfamily. As to quaternary structure, homodimer. The tRNA molecule binds across the dimer.

The protein resides in the cytoplasm. It carries out the reaction tRNA(Ser) + L-serine + ATP = L-seryl-tRNA(Ser) + AMP + diphosphate + H(+). The enzyme catalyses tRNA(Sec) + L-serine + ATP = L-seryl-tRNA(Sec) + AMP + diphosphate + H(+). It participates in aminoacyl-tRNA biosynthesis; selenocysteinyl-tRNA(Sec) biosynthesis; L-seryl-tRNA(Sec) from L-serine and tRNA(Sec): step 1/1. Catalyzes the attachment of serine to tRNA(Ser). Is also able to aminoacylate tRNA(Sec) with serine, to form the misacylated tRNA L-seryl-tRNA(Sec), which will be further converted into selenocysteinyl-tRNA(Sec). The sequence is that of Serine--tRNA ligase from Synechococcus sp. (strain CC9605).